The chain runs to 283 residues: Diaminopimelate epimerase (283 aa).

The substrate site is built by asparagine 13, glutamine 46, and asparagine 66. The active-site Proton donor is cysteine 75. Residues 76 to 77 (GN), asparagine 166, asparagine 199, and 217 to 218 (ER) each bind substrate. Cysteine 226 serves as the catalytic Proton acceptor. A substrate-binding site is contributed by 227 to 228 (GT).

Belongs to the diaminopimelate epimerase family. In terms of assembly, homodimer.

It is found in the cytoplasm. The catalysed reaction is (2S,6S)-2,6-diaminopimelate = meso-2,6-diaminopimelate. The protein operates within amino-acid biosynthesis; L-lysine biosynthesis via DAP pathway; DL-2,6-diaminopimelate from LL-2,6-diaminopimelate: step 1/1. Its function is as follows. Catalyzes the stereoinversion of LL-2,6-diaminopimelate (L,L-DAP) to meso-diaminopimelate (meso-DAP), a precursor of L-lysine and an essential component of the bacterial peptidoglycan. In Herminiimonas arsenicoxydans, this protein is Diaminopimelate epimerase.